Consider the following 432-residue polypeptide: Nematocyst expressed protein 3-like (432 aa).

Residues 1 to 19 (MRVVYLVLVVAVIIAITEA) form the signal peptide. Disulfide bonds link cysteine 52-cysteine 91, cysteine 59-cysteine 84, cysteine 73-cysteine 88, cysteine 125-cysteine 140, cysteine 157-cysteine 176, and cysteine 166-cysteine 180. ShKT domains lie at 59 to 91 (CKAFGKIAKKDKKSCFNNPDKARMACPVSCKLC), 107 to 143 (VVRAMCVDIEVDQCNPDVCYTNPDWATENCRKTCMLC), and 149 to 183 (GPCDTDPRCPFWGQYGYCSTATYIDNHCPYNCDVY). Residues 235–313 (GAQYPAATAA…PEAAPSEPEA (79 aa)) show a composition bias toward low complexity. Residues 235–432 (GAQYPAATAA…KSKSGHKRHH (198 aa)) are disordered. Residues 314–330 (APAPAPEMAPAPAPEMA) are compositionally biased toward pro residues. The segment covering 331 to 408 (PAPEAASAPA…AAPSEQPMPG (78 aa)) has biased composition (low complexity). Over residues 409-432 (KKSKSKPSKRKGVKKSKSGHKRHH) the composition is skewed to basic residues.

This sequence belongs to the NEP3 family. Nematocytes. In late planulae, transcripts are found throughout the ectoderm in nematocytes, with high concentration of expressing cells in the oral pole. In primary polyps, is expressed in nematocytes in the body wall and physa ectoderm and in the upper and lower pharynx.

The protein resides in the nematocyst. The protein localises to the secreted. Probable toxin. The protein is Nematocyst expressed protein 3-like of Nematostella vectensis (Starlet sea anemone).